A 1066-amino-acid chain; its full sequence is MEQEIDQIVQAITIASDPTQASLYQQALAYISTIQQNANETWRLALHIFVDQNTEGHRKHPAQARFFALRVLDEFFDNRFEPLDHESFQAIHQALTAYIQSEYVVGSAEADASFLRNKFSHTLTLFFLCTYIDQWPSFFTDLFTLIRPTESATRSNFNRHISLLFFHIVLEISGEVADQIIKSARPYNAARHARDARVRDAVRDRDAARINAAVLTIVVEGAEQMANLHKSETSSRGPRELEGAVEVVDWGIRTFGSYVGWIDINLTVTPTTVPLLFNLLADSSLPIRLATSVSLLRIVSKGLKEPGDKLQLLKVLSLGQVLDALEAKTRAQQIEREESYREALGKLLNVLGLELAKLVDDCSDEDIRAEASTYITQIQPVMLRFMADEYDDTCSTVFPLLQNILTTYKRHRKISSNPLDESKRSFLASLLQVLLAKMKWEEDADPEDADEDDNAEFDKMRKELRTFLDSILAIDQVLVTDAVKTLALDTITAFKNGVSIKWNDAELGVYLVFIFGEINKSMTRIAGGKGRAAFCQAPAVVDKDKRKATDYSDYPLTTHGEMLLALVQSGVASFPHRTVSLQFFETASRYTDFFKIRKDCIIPTLEAMIDTRGLHNENLNFRSRLFYLFHRFIKESRNEIPPHISGNIIDSMRDLLLIEVEIPAAEDTEIDPLSEAIKNSQFDSQLYLFETAGILTSLLCKTPTQQTAMLLSLVKPLMDDLSVSLQAFSKGGQDLLPIVKVHHIIMALGNIAKGFPDYPTSIPEGHILPPLEIFTEVAQAILVCLEAMNVYKPIRDATRFAFARILATTGPTVTSYIPQLMGNLLAHFEPTELVDFMNFIGLLIHKLQKDMFDVLDQLIGPLSAHITSLLTQPVSGTDEHRAHIETKRAYLALLNNIMASKLDGIFTSERNSSNFEVLLESMQRLAEDVSDPASEKTAIMFLNRSVTVWGQPSSSENGRETGHGLPGFERFIYERLVQTCFRVPSLPQFNLKDGQMMVVLHEIANLLQVICKIRGHEAYNFFISVFLPSQNWPSETALDFMTKLRDLDGKGFRKYFTELIRSSRTS.

It belongs to the exportin family.

The protein localises to the nucleus. Its subcellular location is the cytoplasm. Its function is as follows. tRNA nucleus export receptor which facilitates tRNA translocation across the nuclear pore complex. Involved in pre-tRNA splicing, probably by affecting the interaction of pre-tRNA with splicing endonuclease. This Laccaria bicolor (strain S238N-H82 / ATCC MYA-4686) (Bicoloured deceiver) protein is Exportin-T (LOS1).